Reading from the N-terminus, the 135-residue chain is Small ribosomal subunit protein bS6 (135 aa).

The interval glutamate 98 to glutamate 135 is disordered. Over residues lysine 104–glutamate 122 the composition is skewed to basic and acidic residues. Residues alanine 123–glutamate 135 are compositionally biased toward acidic residues.

It belongs to the bacterial ribosomal protein bS6 family.

Binds together with bS18 to 16S ribosomal RNA. The protein is Small ribosomal subunit protein bS6 of Shewanella amazonensis (strain ATCC BAA-1098 / SB2B).